The chain runs to 431 residues: Enolase (431 aa).

Q167 serves as a coordination point for (2R)-2-phosphoglycerate. The active-site Proton donor is the E209. Residues D246, E290, and D317 each coordinate Mg(2+). K342, R371, S372, and K393 together coordinate (2R)-2-phosphoglycerate. Catalysis depends on K342, which acts as the Proton acceptor.

Belongs to the enolase family. Component of the RNA degradosome, a multiprotein complex involved in RNA processing and mRNA degradation. Requires Mg(2+) as cofactor.

The protein localises to the cytoplasm. The protein resides in the secreted. It is found in the cell surface. It catalyses the reaction (2R)-2-phosphoglycerate = phosphoenolpyruvate + H2O. The protein operates within carbohydrate degradation; glycolysis; pyruvate from D-glyceraldehyde 3-phosphate: step 4/5. Its function is as follows. Catalyzes the reversible conversion of 2-phosphoglycerate (2-PG) into phosphoenolpyruvate (PEP). It is essential for the degradation of carbohydrates via glycolysis. This chain is Enolase, found in Pectobacterium atrosepticum (strain SCRI 1043 / ATCC BAA-672) (Erwinia carotovora subsp. atroseptica).